The chain runs to 440 residues: Transposon Ty1-PR3 Gag polyprotein (440 aa).

Polar residues-rich tracts occupy residues 1-23 (MESQ…SVTS), 48-60 (TKAN…TPAS), and 127-152 (QSQF…GNTF). Disordered stretches follow at residues 1 to 93 (MESQ…MMTQ), 126 to 173 (PQSQ…RPPP), and 352 to 440 (GSRN…PGTY). Residues 153–165 (TDSSSADSDMTST) show a composition bias toward low complexity. The interval 299 to 401 (NNGIHINNKV…NSKSKTARAH (103 aa)) is RNA-binding. Low complexity predominate over residues 402–418 (NVSTSNNSPSTDNDSIS). Residue Ser416 is modified to Phosphoserine. Residues 419-428 (KSTTEPIQLN) are compositionally biased toward polar residues. The segment covering 429-440 (NKHDLHLRPGTY) has biased composition (basic and acidic residues).

Homotrimer.

It localises to the cytoplasm. Capsid protein (CA) is the structural component of the virus-like particle (VLP), forming the shell that encapsulates the retrotransposons dimeric RNA genome. The particles are assembled from trimer-clustered units and there are holes in the capsid shells that allow for the diffusion of macromolecules. CA also has nucleocapsid-like chaperone activity, promoting primer tRNA(i)-Met annealing to the multipartite primer-binding site (PBS), dimerization of Ty1 RNA and initiation of reverse transcription. The chain is Transposon Ty1-PR3 Gag polyprotein (TY1A-PR3) from Saccharomyces cerevisiae (strain ATCC 204508 / S288c) (Baker's yeast).